The sequence spans 404 residues: Serine/threonine transporter SstT (404 aa).

9 helical membrane passes run 17-37 (IGIG…VTAI), 44-64 (FVGA…VQAI), 75-95 (MTLI…VAVI), 138-158 (ALAT…GLAL), 179-199 (IVVW…FSTV), 212-232 (LLIL…NPLL), 287-307 (IPLG…VLTL), 319-339 (FLTA…ASGV), and 354-374 (FGIS…VGVI).

This sequence belongs to the dicarboxylate/amino acid:cation symporter (DAACS) (TC 2.A.23) family.

It localises to the cell membrane. It carries out the reaction L-serine(in) + Na(+)(in) = L-serine(out) + Na(+)(out). It catalyses the reaction L-threonine(in) + Na(+)(in) = L-threonine(out) + Na(+)(out). Involved in the import of serine and threonine into the cell, with the concomitant import of sodium (symport system). The protein is Serine/threonine transporter SstT of Streptococcus equi subsp. zooepidemicus (strain H70).